Reading from the N-terminus, the 424-residue chain is DUF21 domain-containing protein At4g33700 (424 aa).

Over 1-11 (MAVEYVCCSPN) the chain is Extracellular. Residues 8–191 (CSPNFFIHIA…GKGGELTHDE (184 aa)) enclose the CNNM transmembrane domain. The chain crosses the membrane as a helical span at residues 12 to 32 (FFIHIAVIVFLVLFAGLMSGL). Residues 33-70 (TLGLMSLSLVDLEVLAKSGTPEHRKYAAKILPVVKNQH) lie on the Cytoplasmic side of the membrane. The chain crosses the membrane as a helical span at residues 71 to 91 (LLLVTLLICNAAAMETLPIFL). Topologically, residues 92–94 (DGL) are extracellular. A helical transmembrane segment spans residues 95-115 (VTAWGAILISVTLILLFGEII). Residues 116 to 136 (PQSICSRYGLAIGATVAPFVR) are Cytoplasmic-facing. A helical transmembrane segment spans residues 137–157 (VLVFICLPVAWPISKLLDFLL). The Extracellular segment spans residues 158–424 (GHRRAALFRR…DETDHHFEDS (267 aa)). A CBS 1 domain is found at 210-271 (MTPISDIFVI…TINPDEEIPV (62 aa)). Residues asparagine 273 and asparagine 319 are each glycosylated (N-linked (GlcNAc...) asparagine). CBS domains are found at residues 275–331 (TIRR…DVDS) and 355–416 (PNRA…IFDE). Disordered stretches follow at residues 321–340 (SVKE…PQER) and 355–374 (PNRA…SKDN). Serine 331 carries the phosphoserine modification.

The protein resides in the membrane. This chain is DUF21 domain-containing protein At4g33700 (CBSDUF6), found in Arabidopsis thaliana (Mouse-ear cress).